Consider the following 124-residue polypeptide: Small ribosomal subunit protein bS6 (124 aa).

A disordered region spans residues 98–124; the sequence is EASPMLKAREERPRREDVREEAEEAAE. A compositionally biased stretch (basic and acidic residues) spans 104-115; sequence KAREERPRREDV.

This sequence belongs to the bacterial ribosomal protein bS6 family.

Its function is as follows. Binds together with bS18 to 16S ribosomal RNA. This is Small ribosomal subunit protein bS6 from Tolumonas auensis (strain DSM 9187 / NBRC 110442 / TA 4).